The chain runs to 193 residues: Putative nucleotidase YqfW (193 aa).

The protein belongs to the 5'(3')-deoxyribonucleotidase family.

This Bacillus subtilis (strain 168) protein is Putative nucleotidase YqfW (yqfW).